We begin with the raw amino-acid sequence, 340 residues long: Protein RecA (340 aa).

65 to 72 (GPESGGKT) is an ATP binding site.

It belongs to the RecA family.

It localises to the cytoplasm. In terms of biological role, can catalyze the hydrolysis of ATP in the presence of single-stranded DNA, the ATP-dependent uptake of single-stranded DNA by duplex DNA, and the ATP-dependent hybridization of homologous single-stranded DNAs. It interacts with LexA causing its activation and leading to its autocatalytic cleavage. This is Protein RecA from Thermus thermophilus (strain ATCC BAA-163 / DSM 7039 / HB27).